The chain runs to 382 residues: Small ribosomal subunit protein bS1 homolog (382 aa).

4 consecutive S1 motif domains span residues 16 to 84 (GDVV…LSKR), 102 to 167 (KEVF…LSHR), 188 to 256 (GSVL…LSIK), and 273 to 342 (GDVL…LSMR). Serine 243 is subject to Phosphoserine.

This sequence belongs to the bacterial ribosomal protein bS1 family.

Functionally, plays a role in sporulation. Cannot be expressed in wild-type E.coli, does not complement an E.coli rpsA deletion. The chain is Small ribosomal subunit protein bS1 homolog from Bacillus subtilis (strain 168).